A 472-amino-acid polypeptide reads, in one-letter code: Serine/threonine-protein kinase ULK3 (472 aa).

Positions 14–270 (FILTERLGSG…FQDFFAHPWV (257 aa)) constitute a Protein kinase domain. Residues 20–28 (LGSGTYATV) and K44 contribute to the ATP site. The Proton acceptor role is filled by D137. A Phosphoserine modification is found at S176. The region spanning 280–348 (SLGRATALVV…SRAEELKAIV (69 aa)) is the MIT 1 domain. S300, S350, S384, and S464 each carry phosphoserine; by autocatalysis. Positions 375–444 (RLLAALEVAS…ARAEYLKEQV (70 aa)) constitute an MIT 2 domain.

It belongs to the protein kinase superfamily. Ser/Thr protein kinase family. APG1/unc-51/ULK1 subfamily. In terms of assembly, interacts (via protein kinase domain) with SUFU. In terms of processing, autophosphorylated. Autophosphorylation is blocked by interaction with SUFU. As to expression, widely expressed. Highest levels observed in fetal brain. In adult tissues, high levels in brain, liver and kidney, moderate levels in testis and adrenal gland and low levels in heart, lung, stomach, thymus, prostate and placenta. In the brain, highest expression in the hippocampus, high levels also detected in the cerebellum, olfactory bulb and optic nerve. In the central nervous system, lowest levels in the spinal cord.

The protein localises to the cytoplasm. The enzyme catalyses L-seryl-[protein] + ATP = O-phospho-L-seryl-[protein] + ADP + H(+). It carries out the reaction L-threonyl-[protein] + ATP = O-phospho-L-threonyl-[protein] + ADP + H(+). Functionally, serine/threonine protein kinase that acts as a regulator of Sonic hedgehog (SHH) signaling and autophagy. Acts as a negative regulator of SHH signaling in the absence of SHH ligand: interacts with SUFU, thereby inactivating the protein kinase activity and preventing phosphorylation of GLI proteins (GLI1, GLI2 and/or GLI3). Positively regulates SHH signaling in the presence of SHH: dissociates from SUFU, autophosphorylates and mediates phosphorylation of GLI2, activating it and promoting its nuclear translocation. Phosphorylates in vitro GLI2, as well as GLI1 and GLI3, although less efficiently. Also acts as a regulator of autophagy: following cellular senescence, able to induce autophagy. This chain is Serine/threonine-protein kinase ULK3 (ULK3), found in Homo sapiens (Human).